The primary structure comprises 83 residues: MADTSQKPDKATSAAQARQVIDVFHEISTLLNAELDRGTLSICISLIENGINPEALATVVRELKKDADEVRRQIAEGGVRNGE.

This sequence belongs to the MOZART1 family. As to quaternary structure, part of the gamma-tubulin complex.

The protein resides in the cytoplasm. The protein localises to the cytoskeleton. It is found in the microtubule organizing center. It localises to the spindle pole body. Functionally, required for gamma-tubulin complex recruitment to the microtubule organizing center (MTOC). The polypeptide is Mitotic-spindle organizing protein 1 (Botryotinia fuckeliana (strain B05.10) (Noble rot fungus)).